The primary structure comprises 1577 residues: Hemolysin (1577 aa).

The signal sequence occupies residues 1 to 29 (MKSKNFKLSPSGRLAASLAIIFVSLNAYG). The segment covering 437–446 (EKESRSENGN) has biased composition (basic and acidic residues). Disordered stretches follow at residues 437–467 (EKESRSENGNKRNHTSRLESGSWSNSHQTET), 1081–1103 (TDTHSESQSNVNGSANLKVGTTP), 1169–1188 (QSASSEHTEKGNNLSGGVQA), and 1213–1232 (KQDEKSVSREGGTINNSGNL). 3 stretches are compositionally biased toward polar residues: residues 454–467 (LESGSWSNSHQTET), 1081–1095 (TDTHSESQSNVNGSA), and 1169–1184 (QSASSEHTEKGNNLSG).

It is found in the cell outer membrane. Its function is as follows. Bacterial hemolysins are exotoxins that attack blood cell membranes and cause cell rupture by mechanisms not clearly defined. Functionally, cell-bound hemolysin, which releases heme-iron from erythrocytes by interaction with the erythrocyte membrane. HpmA requires HpmB function. The polypeptide is Hemolysin (hpmA) (Proteus mirabilis).